The following is a 248-amino-acid chain: Granzyme B (248 aa).

Residues 1 to 18 (MKLLLLLLSFSLAPKTEA) form the signal peptide. Residues 19 to 20 (GE) constitute a propeptide, activation peptide. One can recognise a Peptidase S1 domain in the interval 21–246 (IIGGHEAKPH…FLSWIKKTMK (226 aa)). Residues C50 and C66 are joined by a disulfide bond. Active-site charge relay system residues include H65 and D109. 2 disulfide bridges follow: C143/C210 and C174/C189. The Charge relay system role is filled by S204.

Belongs to the peptidase S1 family. Granzyme subfamily.

It is found in the secreted. The protein resides in the cytolytic granule. The catalysed reaction is Preferential cleavage: -Asp-|-Xaa- &gt;&gt; -Asn-|-Xaa- &gt; -Met-|-Xaa-, -Ser-|-Xaa-.. Its activity is regulated as follows. Inactivated by the serine protease inhibitor diisopropylfluorophosphate. Abundant protease in the cytosolic granules of cytotoxic T-cells and NK-cells which activates caspase-independent pyroptosis when delivered into the target cell through the immunological synapse. It cleaves after Asp. Once delivered into the target cell, acts by catalyzing cleavage of gasdermin-E (GSDME), releasing the pore-forming moiety of GSDME, thereby triggering pyroptosis and target cell death. Seems to be linked to an activation cascade of caspases (aspartate-specific cysteine proteases) responsible for apoptosis execution. Cleaves caspase-3 and -9 (CASP3 and CASP9, respectively) to give rise to active enzymes mediating apoptosis. Cleaves and activates CASP7 in response to bacterial infection, promoting plasma membrane repair. In Rattus norvegicus (Rat), this protein is Granzyme B (Gzmb).